The chain runs to 47 residues: Photosystem II reaction center protein K (47 aa).

The propeptide occupies 1–10 (MALINFDLLA). A helical transmembrane segment spans residues 26–46 (LPLIPLFFFLLVFVWQAAVGF).

The protein belongs to the PsbK family. PSII is composed of 1 copy each of membrane proteins PsbA, PsbB, PsbC, PsbD, PsbE, PsbF, PsbH, PsbI, PsbJ, PsbK, PsbL, PsbM, PsbT, PsbX, PsbY, Psb30/Ycf12, peripheral proteins PsbO, CyanoQ (PsbQ), PsbU, PsbV and a large number of cofactors. It forms dimeric complexes.

The protein resides in the cellular thylakoid membrane. One of the components of the core complex of photosystem II (PSII). PSII is a light-driven water:plastoquinone oxidoreductase that uses light energy to abstract electrons from H(2)O, generating O(2) and a proton gradient subsequently used for ATP formation. It consists of a core antenna complex that captures photons, and an electron transfer chain that converts photonic excitation into a charge separation. The sequence is that of Photosystem II reaction center protein K from Prochlorococcus marinus (strain NATL2A).